Here is a 768-residue protein sequence, read N- to C-terminus: Protein STRUBBELIG (768 aa).

The first 24 residues, 1–24 (MSFTRWEVFFGLSVLALTMPFSAG), serve as a signal peptide directing secretion. Over 25–341 (VTNLRDVSAI…GSGKFWSTQR (317 aa)) the chain is Extracellular. Cys-57 and Cys-66 are oxidised to a cystine. Residue Asn-70 is glycosylated (N-linked (GlcNAc...) asparagine). 6 LRR repeats span residues 94-115 (SIQV…ALPS), 116-139 (SIRN…SFLS), 140-162 (DLSE…FQQL), 164-186 (KLTK…MGDL), 188-210 (SLKI…EDLF), and 211-231 (LTDL…NLLK). A glycan (N-linked (GlcNAc...) asparagine) is linked at Asn-119. Residues 241 to 334 (PFNTSIITPP…ISPPSGSGSG (94 aa)) are disordered. An N-linked (GlcNAc...) asparagine glycan is attached at Asn-243. 2 stretches are compositionally biased toward pro residues: residues 248-283 (TPPP…PFAP) and 291-301 (QHPPPSPPLVW). Over residues 315-334 (NSVSGQPTLQISPPSGSGSG) the composition is skewed to polar residues. Residues 342-362 (IILVVSSVAIIVLVSGLCVTL) form a helical membrane-spanning segment. Residues 363–768 (WRCCRSKIYN…EIVQDLQHMI (406 aa)) lie on the Cytoplasmic side of the membrane. Positions 385–477 (PYFNKPPSQP…RAAHFPPGLN (93 aa)) are disordered. Polar residues predominate over residues 439–464 (SYYNKDVNTPQKPLQQPPRQFQSNDT). One can recognise a Protein kinase domain in the interval 497 to 768 (FSEENIIGEG…EIVQDLQHMI (272 aa)). Residues 503–511 (IGEGSIGNV) and Lys-525 contribute to the ATP site.

It belongs to the protein kinase superfamily. Ser/Thr protein kinase family. Interacts (via intra-cellular domain) with AN; this interaction is not required for correct subcellular localization and recycling of SUB. Binds to QKY and POQ at the plasma membrane. Binds to QKY at plasmodesmata (PD) in root epidermal cells to promote tissue morphogenesis. As to expression, expressed in leaves, stems, inflorescences, flower buds and developing root epidermis.

The protein localises to the cell membrane. The protein resides in the cell junction. Its subcellular location is the plasmodesma. Regulated at the post-transcriptional level. In terms of biological role, regulates the expression of transcription factors that define the cell fates. Acts in a non-cell-autonomous fashion, functions in a radial inside-out signaling process, and mediates cell morphogenesis and cell fate across clonally distinct cell layers in floral primordia, developing ovules, and root meristems. Seems to be required for the regulation of cell shape and the orientation of the mitotic division plane. Involved in root hair specification, in the formation of the outer integument and the shape of organs such as carpels and petals and is necessary for the shape and height of the stem. Non-functional SUB proteins are retained in the endoplasmic reticulum and degraded by endoplasmic reticulum-associated degradation (ERAD). Collaboratively with QKY and POQ, regulates cell growth anisotropy during gynoecium development, thus linking together cell-cell communication and cellular growth. Together with QKY, links RLK-dependent signal transduction and intercellular communication mediated by plasmodesmata (PD) to regulate tissue morphogenesis. The polypeptide is Protein STRUBBELIG (Arabidopsis thaliana (Mouse-ear cress)).